The chain runs to 434 residues: Serine hydroxymethyltransferase (434 aa).

Residues Leu-124 and 128–130 (GHL) each bind (6S)-5,6,7,8-tetrahydrofolate. An N6-(pyridoxal phosphate)lysine modification is found at Lys-233. Glu-249 contributes to the (6S)-5,6,7,8-tetrahydrofolate binding site.

It belongs to the SHMT family. Homodimer. Requires pyridoxal 5'-phosphate as cofactor.

It localises to the cytoplasm. It catalyses the reaction (6R)-5,10-methylene-5,6,7,8-tetrahydrofolate + glycine + H2O = (6S)-5,6,7,8-tetrahydrofolate + L-serine. The protein operates within one-carbon metabolism; tetrahydrofolate interconversion. It participates in amino-acid biosynthesis; glycine biosynthesis; glycine from L-serine: step 1/1. Functionally, catalyzes the reversible interconversion of serine and glycine with tetrahydrofolate (THF) serving as the one-carbon carrier. This reaction serves as the major source of one-carbon groups required for the biosynthesis of purines, thymidylate, methionine, and other important biomolecules. Also exhibits THF-independent aldolase activity toward beta-hydroxyamino acids, producing glycine and aldehydes, via a retro-aldol mechanism. This is Serine hydroxymethyltransferase from Synechococcus sp. (strain JA-3-3Ab) (Cyanobacteria bacterium Yellowstone A-Prime).